Reading from the N-terminus, the 305-residue chain is Ribosomal RNA small subunit methyltransferase H (305 aa).

S-adenosyl-L-methionine is bound by residues 47–49 (GGH), Asp-66, Phe-93, Asp-108, and Gln-115. Residues 279 to 305 (ADSNEKLNNPRSRSAKLRLAKKRNPNE) form a disordered region. Residues 291–305 (RSAKLRLAKKRNPNE) show a composition bias toward basic residues.

Belongs to the methyltransferase superfamily. RsmH family.

Its subcellular location is the cytoplasm. The enzyme catalyses cytidine(1402) in 16S rRNA + S-adenosyl-L-methionine = N(4)-methylcytidine(1402) in 16S rRNA + S-adenosyl-L-homocysteine + H(+). In terms of biological role, specifically methylates the N4 position of cytidine in position 1402 (C1402) of 16S rRNA. The polypeptide is Ribosomal RNA small subunit methyltransferase H (Prochlorococcus marinus (strain SARG / CCMP1375 / SS120)).